The primary structure comprises 125 residues: Mite group 2 allergen Gly d 2.02 (125 aa).

The protein belongs to the NPC2 family.

The protein localises to the secreted. The polypeptide is Mite group 2 allergen Gly d 2.02 (Glycyphagus domesticus (House itch mite)).